Reading from the N-terminus, the 231-residue chain is Protein PIMREG (231 aa).

Positions 1–44 (MASQWQGMRTSVRRRSLLKEEQLEKKEVTRSAGGHPETGPLGSL) are disordered. A phosphoserine mark is found at Ser-11 and Ser-16. Short sequence motifs (D-box) lie at residues 14–17 (RRSL) and 53–56 (PLRA). Basic and acidic residues predominate over residues 17 to 29 (LLKEEQLEKKEVT). A Phosphoserine modification is found at Ser-72. Disordered regions lie at residues 115-138 (KVRRKRGAQKDRGSPPPSLSQKNT) and 152-197 (HLRL…DLEP). Residue Ser-128 is modified to Phosphoserine; by Uhmk1; in vitro. Polar residues predominate over residues 178–190 (PCSSTEPLCSPSE). Phosphoserine occurs at positions 191 and 193.

Interacts with PICALM; this interaction may target PICALM to the nucleus. During mitosis, associates with HDAC2 and MTA2 subunits of the chromatin-remodeling NuRD complex; this association is strongest at prometaphase and decreases as the cell progresses through metaphase and anaphase. Ubiquitinated by the anaphase-promoting complex/cyclosome (APC/C) complex in the presence of FZR1, leading to its degradation by the proteasome during mitotic exit. However, degradation is not essential for normal mitotic progression within a single cell cycle. Mainly expressed in thymus and ovary. Expressed in all T-cell subpopulations isolated from the thymus, macrophages, pro-erythrocytes, granulocytes, mast cells and progenitor cells.

The protein localises to the nucleus. It is found in the nucleolus. Its function is as follows. During mitosis, may play a role in the metaphase-to-anaphase transition. This Mus musculus (Mouse) protein is Protein PIMREG.